The sequence spans 343 residues: Protein RecA (343 aa).

68–75 (GPESGGKT) contributes to the ATP binding site.

Belongs to the RecA family.

The protein localises to the cytoplasm. Functionally, can catalyze the hydrolysis of ATP in the presence of single-stranded DNA, the ATP-dependent uptake of single-stranded DNA by duplex DNA, and the ATP-dependent hybridization of homologous single-stranded DNAs. It interacts with LexA causing its activation and leading to its autocatalytic cleavage. In Syntrophus aciditrophicus (strain SB), this protein is Protein RecA.